The following is a 302-amino-acid chain: Pantothenate synthetase (302 aa).

30-37 (MGALHGGH) serves as a coordination point for ATP. Residue His37 is the Proton donor of the active site. A (R)-pantoate-binding site is contributed by Gln61. Residue Gln61 coordinates beta-alanine. 147–150 (GEKD) provides a ligand contact to ATP. Gln153 is a binding site for (R)-pantoate. Residues Val176 and 184–187 (KSSR) contribute to the ATP site.

The protein belongs to the pantothenate synthetase family. Homodimer.

The protein localises to the cytoplasm. It catalyses the reaction (R)-pantoate + beta-alanine + ATP = (R)-pantothenate + AMP + diphosphate + H(+). The protein operates within cofactor biosynthesis; (R)-pantothenate biosynthesis; (R)-pantothenate from (R)-pantoate and beta-alanine: step 1/1. In terms of biological role, catalyzes the condensation of pantoate with beta-alanine in an ATP-dependent reaction via a pantoyl-adenylate intermediate. This chain is Pantothenate synthetase, found in Shouchella clausii (strain KSM-K16) (Alkalihalobacillus clausii).